Here is a 345-residue protein sequence, read N- to C-terminus: MSTELQNTIENNDIRESQMWNSKELKEAIKEIEKMFGKGSIMVLGQSDNLNIETFSSGSLLLDNALGIGGYPKGRIIEIYGPESSGKTTLSLHAICEVQKLGGIAAFIDAEHSLEPKYCQTLGIDTNKLLVSQPDNGEQALDILEMLINSNSIDLIVVDSVAALVPKTELDGEMSDQSIGLQARMMSKALRKLNWLIAKSNTTVIFINQLREKIGVIFGNPETTTGGKALKFFSSIRLEVRKAENILNNYEIIGNKIKIKVVKNKTAIPFKTTTISLLYNKGIDKLGELVDLLVSYEIIEKSGVWYSYQNEKIGQGRTSVIQWLNADENRINELTEQVKKLIKQD.

81–88 is an ATP binding site; it reads GPESSGKT.

Belongs to the RecA family.

Its subcellular location is the cytoplasm. Functionally, can catalyze the hydrolysis of ATP in the presence of single-stranded DNA, the ATP-dependent uptake of single-stranded DNA by duplex DNA, and the ATP-dependent hybridization of homologous single-stranded DNAs. It interacts with LexA causing its activation and leading to its autocatalytic cleavage. The chain is Protein RecA from Mycoplasma mycoides.